The chain runs to 128 residues: Large ribosomal subunit protein bL12 (128 aa).

It belongs to the bacterial ribosomal protein bL12 family. As to quaternary structure, homodimer. Part of the ribosomal stalk of the 50S ribosomal subunit. Forms a multimeric L10(L12)X complex, where L10 forms an elongated spine to which 2 to 4 L12 dimers bind in a sequential fashion. Binds GTP-bound translation factors.

Its function is as follows. Forms part of the ribosomal stalk which helps the ribosome interact with GTP-bound translation factors. Is thus essential for accurate translation. This is Large ribosomal subunit protein bL12 from Corynebacterium efficiens (strain DSM 44549 / YS-314 / AJ 12310 / JCM 11189 / NBRC 100395).